The primary structure comprises 350 residues: Chemokine C-C motif receptor-like 2 (350 aa).

At 1–43 (MANYTSAPEDDYDVFIEDDLSNDERELCSPYDPQALLAQLVPY) the chain is on the extracellular side. The N-linked (GlcNAc...) asparagine glycan is linked to N3. A helical transmembrane segment spans residues 44 to 64 (LFITVFLVGLLDNILVVLIMV). Over 65–74 (KYKGLKQVEN) the chain is Cytoplasmic. A helical membrane pass occupies residues 75-95 (IYLLNLAVCNLCFLCTLPFWV). Over 96–110 (HMAWHEGDPGEPLCK) the chain is Extracellular. The cysteines at positions 109 and 187 are disulfide-linked. The chain crosses the membrane as a helical span at residues 111–131 (ILLVLYSVGLFSEAFFNVLLT). Over 132–149 (VQRYQKFFQMRGFFSATR) the chain is Cytoplasmic. A helical membrane pass occupies residues 150 to 170 (MVAGSIFPSALVWVIAVLVML). The Extracellular portion of the chain corresponds to 171-204 (PELAFYKPQMENQKYKCFFGRPLFLPADETFWKH). A helical membrane pass occupies residues 205–225 (FLTLKMNILGFLLPLFVFVFC). The Cytoplasmic portion of the chain corresponds to 226–244 (YVRMRRTLKFGERGYDLFK). Residues 245–265 (LVFTIMVVFLLMWGPYNIALF) form a helical membrane-spanning segment. The Extracellular portion of the chain corresponds to 266–288 (LSAFNEHFSLHGCESSHNLDRST). The chain crosses the membrane as a helical span at residues 289-309 (LITKIIATTHCCVNPLLYVFF). The Cytoplasmic segment spans residues 310–350 (DEAFRKHLYHFCHLCNDTAPQPTEEPAQGTSREEPCLSTKM). The disordered stretch occupies residues 329-350 (PQPTEEPAQGTSREEPCLSTKM).

This sequence belongs to the G-protein coupled receptor 1 family.

The protein localises to the cell membrane. Receptor for CCL19 and chemerin/RARRES2. Does not appear to be a signaling receptor, but may have a role in modulating chemokine-triggered immune responses by capturing and internalizing CCL19 or by presenting RARRES2 ligand to CMKLR1, a functional signaling receptor. Plays a critical role for the development of Th2 responses. This Sus scrofa (Pig) protein is Chemokine C-C motif receptor-like 2 (CCRL2).